We begin with the raw amino-acid sequence, 388 residues long: Carbohydrate sulfotransferase 4 (388 aa).

The Cytoplasmic segment spans residues Met1–Gly7. The helical; Signal-anchor for type II membrane protein transmembrane segment at Arg8 to Val28 threads the bilayer. Residues His29–Gly388 lie on the Lumenal side of the membrane. Residues Trp50 to Phe56 and Arg204 to Ser212 each bind 3'-phosphoadenylyl sulfate. Residues Asn307, Asn328, and Asn369 are each glycosylated (N-linked (GlcNAc...) asparagine).

This sequence belongs to the sulfotransferase 1 family. Gal/GlcNAc/GalNAc subfamily. As to quaternary structure, monomer. As to expression, specifically expressed in high endothelial venules (HEV) of peripheral lymph nodes.

The protein localises to the golgi apparatus membrane. The catalysed reaction is 3-O-{N-acetyl-beta-D-glucosaminyl-(1-&gt;3)-beta-D-galactosyl-(1-&gt;3)-N-acetyl-alpha-D-galactosaminyl}-L-threonyl-[protein] + 3'-phosphoadenylyl sulfate = 3-O-{6-O-sulfo-N-acetyl-beta-D-glucosaminyl-(1-&gt;3)-beta-D-galactosyl-(1-&gt;3)-N-acetyl-alpha-D-galactosaminyl}-L-threonyl-[protein] + adenosine 3',5'-bisphosphate + H(+). The enzyme catalyses 3-O-{N-acetyl-beta-D-glucosaminyl-(1-&gt;3)-beta-D-galactosyl-(1-&gt;3)-N-acetyl-alpha-D-galactosaminyl}-L-seryl-[protein] + 3'-phosphoadenylyl sulfate = 3-O-{6-O-sulfo-N-acetyl-beta-D-glucosaminyl-(1-&gt;3)-beta-D-galactosyl-(1-&gt;3)-N-acetyl-alpha-D-galactosaminyl}-L-seryl-[protein] + adenosine 3',5'-bisphosphate + H(+). It catalyses the reaction a 3-O-{beta-D-galactosyl-(1-&gt;3)-[N-acetyl-beta-D-glucosaminyl-(1-&gt;6)]-N-acetyl-alpha-D-galactosaminyl}-L-threonyl-[protein] + 3'-phosphoadenylyl sulfate = 3-O-{beta-D-galactosyl-(1-&gt;3)-[6-O-sulfo-N-acetyl-beta-D-glucosaminyl-(1-&gt;6)]-N-acetyl-alpha-D-galactosaminyl}-L-threonyl-[protein] + adenosine 3',5'-bisphosphate + H(+). It carries out the reaction 3-O-{beta-D-galactosyl-(1-&gt;3)-[N-acetyl-beta-D-glucosaminyl-(1-&gt;6)]-N-acetyl-alpha-D-galactosaminyl}-L-seryl-[protein] + 3'-phosphoadenylyl sulfate = 3-O-{beta-D-galactosyl-(1-&gt;3)-[6-O-sulfo-N-acetyl-beta-D-glucosaminyl-(1-&gt;6)]-N-acetyl-alpha-D-galactosaminyl}-L-seryl-[protein] + adenosine 3',5'-bisphosphate + H(+). The protein operates within protein modification; carbohydrate sulfation. Functionally, sulfotransferase involved in SELL/L-selectin ligand biosynthesis pathway. Catalyzes the transfer of the sulfate group from 3'-phospho-5'-adenylyl sulfate (PAPS) onto the hydroxyl group at C-6 position of the non-reducing N-acetylglucosamine (GlcNAc) residue within O-linked mucin-type glycans. Contributes to generate sialyl 6-sulfo Lewis X determinant (also known as MECA-79 epitope) for SELL recognition, a prerequisite for continuous lymphocyte homing into peripheral lymph nodes and antigen immune surveillance. Transfers the sulfate group primarily on core 2 GlcNAcbeta1-6(Galbeta1-3)GalNAcalphaSer/Thr and extended core 1 GlcNAcbeta1-3Galbeta1-3GalNAcalphaSer/Thr based O-linked glycans on CD34 and GLYCAM1 peripheral node addressins (PNAds) expressed on the lumenal side of high endothelial venules (HEVs). The recognition of PNAds by SELL initiates a multistep process comprising tethering and rolling of blood lymphocytes on HEVs against the blood flow, followed by chemokine signaling, integrin-mediated lymphocyte adhesion onto endothelial cells and lymphocyte transendothelial migration. Modulates rolling velocity and differential T and B lymphocyte recruitment into peripheral lymph nodes, with a major role in B lymphocyte homing. Might be redundant in sulfation of MADCAM1 and lymphocyte trafficking to mesenteric lymph nodes. Can also sulfonate core 3 GlcNAcbeta1-3GalNAc-R based glycans as well as GlcNAcbeta1-3Galbeta1-Glc, GlcNAcbeta1-6ManOMe and GlcNAcbeta1-2Man oligosaccharides, which might be ectopically expressed during tumorigenesis. This chain is Carbohydrate sulfotransferase 4 (Chst4), found in Mus musculus (Mouse).